Reading from the N-terminus, the 466-residue chain is Reticulophagy regulator 3 (466 aa).

Residues Met-1–Trp-80 are Cytoplasmic-facing. Ser-26 is modified (phosphoserine). A helical transmembrane segment spans residues Phe-81–Val-101. At Cys-102 to Lys-168 the chain is on the lumenal side. Residues Phe-169 to Ile-187 traverse the membrane as a helical segment. Topologically, residues Pro-188 to Leu-192 are cytoplasmic. The chain crosses the membrane as a helical span at residues Ser-193–Leu-211. Over Trp-212 to Glu-381 the chain is Lumenal. The tract at residues Arg-244–Glu-263 is disordered. Positions Leu-248–Asp-259 are enriched in basic and acidic residues. The residue at position 254 (Thr-254) is a Phosphothreonine. 2 positions are modified to phosphoserine: Ser-258 and Ser-260. A Phosphothreonine modification is found at Thr-283. Phosphoserine occurs at positions 285, 288, 293, and 303. Positions Ser-285–Ser-335 are disordered. Polar residues predominate over residues Cys-294–Thr-310. Residues Thr-307 and Thr-310 each carry the phosphothreonine modification. Phosphoserine occurs at positions 313, 320, and 360. The span at Leu-316–Pro-331 shows a compositional bias: basic and acidic residues. Residues Leu-382 to Val-401 traverse the membrane as a helical segment. Residues Ser-402 to His-466 lie on the Cytoplasmic side of the membrane. Residues Glu-412 to Gly-444 are disordered. Thr-440 is subject to Phosphothreonine. Positions Asp-445–Leu-450 match the LIR motif motif.

It belongs to the RETREG family. As to quaternary structure, interacts with ATG8 family modifier proteins MAP1LC3A, MAP1LC3B, GABARAPL1 and GABARAPL2. Also interacts with ATG8 family modifier protein GABARAP. Interacts with CANX. Interacts with RTN4 isoform B. In terms of tissue distribution, widely expressed with highest levels in brain, lung, liver, muscle and spleen (protein level). Mainly expressed in the central nervous system and in parenchymatous organs including liver, lung and kidney.

It is found in the endoplasmic reticulum membrane. In terms of biological role, endoplasmic reticulum (ER)-anchored autophagy regulator which exists in an inactive state under basal conditions but is activated following cellular stress. When activated, induces ER fragmentation and mediates ER delivery into lysosomes through sequestration into autophagosomes via interaction with ATG8 family proteins. Promotes ER membrane curvature and ER tubulation required for subsequent ER fragmentation and engulfment into autophagosomes. Required for collagen quality control in a LIR motif-dependent manner. Mediates NRF1-enhanced neurite outgrowth. The chain is Reticulophagy regulator 3 (Retreg3) from Mus musculus (Mouse).